The chain runs to 513 residues: Activin receptor type-2B (513 aa).

An N-terminal signal peptide occupies residues 1-18; the sequence is MTAPWAALALLWGSLCAG. Residues 19-137 lie on the Extracellular side of the membrane; sequence SGRGEAETRE…PPPTAPTLLT (119 aa). Cystine bridges form between cysteine 29–cysteine 59, cysteine 49–cysteine 77, cysteine 84–cysteine 103, cysteine 90–cysteine 102, and cysteine 104–cysteine 109. Asparagine 42 and asparagine 65 each carry an N-linked (GlcNAc...) asparagine glycan. The helical transmembrane segment at 138 to 158 threads the bilayer; the sequence is VLAYSLLPIGGLSLIVLLAFW. Residues 159–513 are Cytoplasmic-facing; the sequence is MYRHRKPPYG…VDLLPKESSI (355 aa). Residues 190-481 form the Protein kinase domain; it reads LQLLEIKARG…AGCVEERVSL (292 aa). ATP contacts are provided by residues 196–204 and lysine 217; that span reads KARGRFGCV. Aspartate 322 acts as the Proton acceptor in catalysis. An interaction with DYNLT1 region spans residues 492–513; that stretch reads DCLVSLVTSVTNVDLLPKESSI.

The protein belongs to the protein kinase superfamily. TKL Ser/Thr protein kinase family. TGFB receptor subfamily. As to quaternary structure, forms an activin receptor complex with activin type II receptors such as ACVR1B. Interacts with VPS39. Interacts with DYNLT1. Interacts with BMP3. Interacts with BMP2. The cofactor is Mg(2+). Requires Mn(2+) as cofactor. In terms of processing, phosphorylated. Constitutive phosphorylation is in part catalyzed by its own kinase activity.

The protein resides in the cell membrane. It carries out the reaction L-threonyl-[receptor-protein] + ATP = O-phospho-L-threonyl-[receptor-protein] + ADP + H(+). The catalysed reaction is L-seryl-[receptor-protein] + ATP = O-phospho-L-seryl-[receptor-protein] + ADP + H(+). Transmembrane serine/threonine kinase activin type-2 receptor forming an activin receptor complex with activin type-1 serine/threonine kinase receptors (ACVR1, ACVR1B or ACVR1c). Transduces the activin signal from the cell surface to the cytoplasm and is thus regulating many physiological and pathological processes including neuronal differentiation and neuronal survival, hair follicle development and cycling, FSH production by the pituitary gland, wound healing, extracellular matrix production, immunosuppression and carcinogenesis. Activin is also thought to have a paracrine or autocrine role in follicular development in the ovary. Within the receptor complex, the type-2 receptors act as a primary activin receptors (binds activin-A/INHBA, activin-B/INHBB as well as inhibin-A/INHA-INHBA). The type-1 receptors like ACVR1B act as downstream transducers of activin signals. Activin binds to type-2 receptor at the plasma membrane and activates its serine-threonine kinase. The activated receptor type-2 then phosphorylates and activates the type-1 receptor. Once activated, the type-1 receptor binds and phosphorylates the SMAD proteins SMAD2 and SMAD3, on serine residues of the C-terminal tail. Soon after their association with the activin receptor and subsequent phosphorylation, SMAD2 and SMAD3 are released into the cytoplasm where they interact with the common partner SMAD4. This SMAD complex translocates into the nucleus where it mediates activin-induced transcription. Inhibitory SMAD7, which is recruited to ACVR1B through FKBP1A, can prevent the association of SMAD2 and SMAD3 with the activin receptor complex, thereby blocking the activin signal. Activin signal transduction is also antagonized by the binding to the receptor of inhibin-B via the IGSF1 inhibin coreceptor. The chain is Activin receptor type-2B (Acvr2b) from Rattus norvegicus (Rat).